Reading from the N-terminus, the 213-residue chain is Superoxide dismutase [Fe] (213 aa).

The Fe cation site is built by H28, H82, D164, and H168.

The protein belongs to the iron/manganese superoxide dismutase family. Homotetramer. Requires Fe cation as cofactor.

It catalyses the reaction 2 superoxide + 2 H(+) = H2O2 + O2. Its function is as follows. Destroys superoxide anion radicals which are normally produced within the cells and which are toxic to biological systems. The sequence is that of Superoxide dismutase [Fe] (sodB) from Aquifex aeolicus (strain VF5).